The primary structure comprises 100 residues: Integration host factor subunit alpha 2 (100 aa).

This sequence belongs to the bacterial histone-like protein family. As to quaternary structure, heterodimer of an alpha and a beta chain.

Its function is as follows. This protein is one of the two subunits of integration host factor, a specific DNA-binding protein that functions in genetic recombination as well as in transcriptional and translational control. This chain is Integration host factor subunit alpha 2, found in Dechloromonas aromatica (strain RCB).